The primary structure comprises 488 residues: Cobyric acid synthase (488 aa).

Residues 248-441 form the GATase cobBQ-type domain; the sequence is VLRVVVPALP…VHGLFDAPDA (194 aa). The active-site Nucleophile is Cys328. The active site involves His433.

It belongs to the CobB/CobQ family. CobQ subfamily.

It functions in the pathway cofactor biosynthesis; adenosylcobalamin biosynthesis. Its function is as follows. Catalyzes amidations at positions B, D, E, and G on adenosylcobyrinic A,C-diamide. NH(2) groups are provided by glutamine, and one molecule of ATP is hydrogenolyzed for each amidation. This is Cobyric acid synthase from Burkholderia ambifaria (strain ATCC BAA-244 / DSM 16087 / CCUG 44356 / LMG 19182 / AMMD) (Burkholderia cepacia (strain AMMD)).